A 602-amino-acid chain; its full sequence is Elongation factor 4 (602 aa).

The 190-residue stretch at 7 to 196 (SKIRNFCIIA…HPQNEIKSPT (190 aa)) folds into the tr-type G domain. Residues 19-24 (DHGKST) and 136-139 (NKVD) each bind GTP.

The protein belongs to the TRAFAC class translation factor GTPase superfamily. Classic translation factor GTPase family. LepA subfamily.

It is found in the cell inner membrane. It catalyses the reaction GTP + H2O = GDP + phosphate + H(+). Functionally, required for accurate and efficient protein synthesis under certain stress conditions. May act as a fidelity factor of the translation reaction, by catalyzing a one-codon backward translocation of tRNAs on improperly translocated ribosomes. Back-translocation proceeds from a post-translocation (POST) complex to a pre-translocation (PRE) complex, thus giving elongation factor G a second chance to translocate the tRNAs correctly. Binds to ribosomes in a GTP-dependent manner. The protein is Elongation factor 4 of Prochlorococcus marinus (strain MIT 9515).